A 168-amino-acid chain; its full sequence is Putative ankyrin repeat protein RBE_1411 (168 aa).

3 ANK repeats span residues 59–88 (TIFS…LQHK), 98–127 (YGDT…DLTI), and 131–160 (KGET…ILGN).

The polypeptide is Putative ankyrin repeat protein RBE_1411 (Rickettsia bellii (strain RML369-C)).